Here is a 778-residue protein sequence, read N- to C-terminus: Endonuclease MutS2 (778 aa).

329–336 (GPNTGGKT) contacts ATP. Positions 703 to 778 (LDLRGKRYEE…GSGCTIVTFK (76 aa)) constitute a Smr domain.

It belongs to the DNA mismatch repair MutS family. MutS2 subfamily. As to quaternary structure, homodimer. Binds to stalled ribosomes, contacting rRNA.

Endonuclease that is involved in the suppression of homologous recombination and thus may have a key role in the control of bacterial genetic diversity. Functionally, acts as a ribosome collision sensor, splitting the ribosome into its 2 subunits. Detects stalled/collided 70S ribosomes which it binds and splits by an ATP-hydrolysis driven conformational change. Acts upstream of the ribosome quality control system (RQC), a ribosome-associated complex that mediates the extraction of incompletely synthesized nascent chains from stalled ribosomes and their subsequent degradation. Probably generates substrates for RQC. In Streptococcus suis (strain 98HAH33), this protein is Endonuclease MutS2.